Here is a 216-residue protein sequence, read N- to C-terminus: MAAPAPAPRILVLLLLLLPAPEGAQSELCMISHGRKVDPWVCPDFCCGNCNDQYCCSDVLKQVMWIEEDCHAPEASILTDDFDSGFDSDPVARFGTVIAIGVTLFVIAVVTVIVCCTCSCCCLYKMCRRPQPVVTTTMATTVTHTPYLQPPSYPGPTYQGYHSVVPQPGMPTAPYPTQPTGPPAYHETMAGGAALPYPASQPPYNPAYMEPPKAVP.

The signal sequence occupies residues 1–26; sequence MAAPAPAPRILVLLLLLLPAPEGAQS. The Extracellular segment spans residues 27–93; sequence ELCMISHGRK…SGFDSDPVAR (67 aa). A helical transmembrane segment spans residues 94-114; it reads FGTVIAIGVTLFVIAVVTVIV. The Cytoplasmic portion of the chain corresponds to 115 to 216; it reads CCTCSCCCLY…AYMEPPKAVP (102 aa).

This sequence belongs to the shisa family. In terms of assembly, interacts with PDCD6; PDCD6 can stabilize SHISA5.

The protein resides in the endoplasmic reticulum membrane. It is found in the nucleus membrane. In terms of biological role, can induce apoptosis in a caspase-dependent manner and plays a role in p53/TP53-dependent apoptosis. This Bos taurus (Bovine) protein is Protein shisa-5 (SHISA5).